The chain runs to 152 residues: Catabolic 3-dehydroquinase (152 aa).

Tyr24 serves as the catalytic Proton acceptor. The substrate site is built by Asn75, His81, and Asp88. The active-site Proton donor is the His101. Substrate contacts are provided by residues 102–103 and Arg112; that span reads IS.

Belongs to the type-II 3-dehydroquinase family. As to quaternary structure, homododecamer. Adopts a ring-like structure, composed of an arrangement of two hexameric rings stacked on top of one another.

It carries out the reaction 3-dehydroquinate = 3-dehydroshikimate + H2O. The protein operates within aromatic compound metabolism; 3,4-dihydroxybenzoate biosynthesis; 3,4-dihydroxybenzoate from 3-dehydroquinate: step 1/2. Functionally, is involved in the catabolism of quinate. Allows the utilization of quinate as carbon source via the beta-ketoadipate pathway. This chain is Catabolic 3-dehydroquinase, found in Phaeosphaeria nodorum (strain SN15 / ATCC MYA-4574 / FGSC 10173) (Glume blotch fungus).